The sequence spans 556 residues: Phosphomethylpyrimidine synthase (556 aa).

Substrate contacts are provided by residues Asn-191, Met-220, Tyr-249, His-285, 305–307 (SRG), 346–349 (DALR), and Glu-385. His-389 contacts Zn(2+). Tyr-412 provides a ligand contact to substrate. His-453 serves as a coordination point for Zn(2+). [4Fe-4S] cluster is bound by residues Cys-535, Cys-538, and Cys-543.

This sequence belongs to the ThiC family. Requires [4Fe-4S] cluster as cofactor.

The enzyme catalyses 5-amino-1-(5-phospho-beta-D-ribosyl)imidazole + S-adenosyl-L-methionine = 4-amino-2-methyl-5-(phosphooxymethyl)pyrimidine + CO + 5'-deoxyadenosine + formate + L-methionine + 3 H(+). The protein operates within cofactor biosynthesis; thiamine diphosphate biosynthesis. In terms of biological role, catalyzes the synthesis of the hydroxymethylpyrimidine phosphate (HMP-P) moiety of thiamine from aminoimidazole ribotide (AIR) in a radical S-adenosyl-L-methionine (SAM)-dependent reaction. The chain is Phosphomethylpyrimidine synthase from Chlorobaculum tepidum (strain ATCC 49652 / DSM 12025 / NBRC 103806 / TLS) (Chlorobium tepidum).